Here is a 135-residue protein sequence, read N- to C-terminus: RxLR effector protein PITG_02860 (135 aa).

The first 18 residues, 1-18 (MRLAFLLLAVSHFICGNA), serve as a signal peptide directing secretion. The short motif at 48–64 (RKLLRTDERLSEANEER) is the RxLR-dEER element. Residues 126–135 (LKDPQAFRGP) form an NRL1-binding domain region.

The protein belongs to the RxLR effector family. Interacts with host ubiquitin E3 ligase NRL1.

The protein localises to the secreted. Its subcellular location is the host cytoplasm. It is found in the host nucleus. It localises to the host nucleoplasm. In terms of biological role, effector that promotes P.infestans virulence and suppresses pattern-triggered immunity (PTI). Interacts with the host ubiquitin E3 ligase NRL1 and enhances the association between NRL1 and SWAP70 to promote proteasome-mediated degradation of SWAP70, which results in the suppression of immunity. The polypeptide is RxLR effector protein PITG_02860 (Phytophthora infestans (strain T30-4) (Potato late blight agent)).